The following is a 1396-amino-acid chain: DNA-directed RNA polymerase subunit beta (1396 aa).

Belongs to the RNA polymerase beta chain family. As to quaternary structure, the RNAP catalytic core consists of 2 alpha, 1 beta, 1 beta' and 1 omega subunit. When a sigma factor is associated with the core the holoenzyme is formed, which can initiate transcription.

It carries out the reaction RNA(n) + a ribonucleoside 5'-triphosphate = RNA(n+1) + diphosphate. Functionally, DNA-dependent RNA polymerase catalyzes the transcription of DNA into RNA using the four ribonucleoside triphosphates as substrates. In Erythrobacter litoralis (strain HTCC2594), this protein is DNA-directed RNA polymerase subunit beta.